The following is a 1034-amino-acid chain: Translation initiation factor IF-2 (1034 aa).

2 disordered regions span residues 118 to 140 (AAEA…QSVE) and 154 to 446 (EAEA…NESA). Low complexity-rich tracts occupy residues 162-178 (TPPV…AAAP) and 212-228 (PAVK…PAAS). The span at 304–315 (DRAREDARRAAE) shows a compositional bias: basic and acidic residues. A tr-type G domain is found at 535–702 (PRAPVVTVMG…NVLLQAEILE (168 aa)). The segment at 544 to 551 (GHVDHGKT) is G1. 544 to 551 (GHVDHGKT) provides a ligand contact to GTP. The segment at 569 to 573 (GITQH) is G2. A G3 region spans residues 590–593 (DTPG). GTP-binding positions include 590 to 594 (DTPGH) and 644 to 647 (NKID). The interval 644 to 647 (NKID) is G4. The segment at 680–682 (SAK) is G5.

It belongs to the TRAFAC class translation factor GTPase superfamily. Classic translation factor GTPase family. IF-2 subfamily.

The protein localises to the cytoplasm. Functionally, one of the essential components for the initiation of protein synthesis. Protects formylmethionyl-tRNA from spontaneous hydrolysis and promotes its binding to the 30S ribosomal subunits. Also involved in the hydrolysis of GTP during the formation of the 70S ribosomal complex. The protein is Translation initiation factor IF-2 of Bordetella avium (strain 197N).